The sequence spans 212 residues: ATP-dependent dethiobiotin synthetase BioD (212 aa).

Gly-13–Val-18 provides a ligand contact to ATP. Residue Thr-17 participates in Mg(2+) binding. Residue Lys-33 is part of the active site. Ser-37 is a binding site for substrate. Glu-100 lines the Mg(2+) pocket. Residues Glu-100 to Gly-103, Ile-160 to Ser-161, and Pro-184 to Leu-186 each bind ATP.

This sequence belongs to the dethiobiotin synthetase family. In terms of assembly, homodimer. The cofactor is Mg(2+).

It localises to the cytoplasm. The catalysed reaction is (7R,8S)-7,8-diammoniononanoate + CO2 + ATP = (4R,5S)-dethiobiotin + ADP + phosphate + 3 H(+). Its pathway is cofactor biosynthesis; biotin biosynthesis; biotin from 7,8-diaminononanoate: step 1/2. Its function is as follows. Catalyzes a mechanistically unusual reaction, the ATP-dependent insertion of CO2 between the N7 and N8 nitrogen atoms of 7,8-diaminopelargonic acid (DAPA, also called 7,8-diammoniononanoate) to form a ureido ring. In Brucella abortus (strain S19), this protein is ATP-dependent dethiobiotin synthetase BioD.